The sequence spans 180 residues: Large ribosomal subunit protein uL15 (180 aa).

Residues 1-62 (MKKERLEQAS…KTAGRGSKGQ (62 aa)) are disordered.

This sequence belongs to the universal ribosomal protein uL15 family. Part of the 50S ribosomal subunit.

In terms of biological role, binds to the 23S rRNA. The polypeptide is Large ribosomal subunit protein uL15 (Leptospira interrogans serogroup Icterohaemorrhagiae serovar copenhageni (strain Fiocruz L1-130)).